Reading from the N-terminus, the 149-residue chain is Ribonuclease H (149 aa).

Positions 1-141 constitute an RNase H type-1 domain; that stretch reads MKTVTLFSDG…CDTMAREKAT (141 aa). Residues aspartate 9, glutamate 47, aspartate 69, and aspartate 133 each coordinate Mg(2+).

It belongs to the RNase H family. Monomer. The cofactor is Mg(2+).

It localises to the cytoplasm. The enzyme catalyses Endonucleolytic cleavage to 5'-phosphomonoester.. In terms of biological role, endonuclease that specifically degrades the RNA of RNA-DNA hybrids. The sequence is that of Ribonuclease H from Campylobacter curvus (strain 525.92).